The following is a 410-amino-acid chain: Glycylpeptide N-tetradecanoyltransferase (410 aa).

Residues Phe-30, Trp-31, Phe-162, Leu-163, Cys-164, Val-165, Ser-171, Arg-173, Leu-174, and Ala-175 each contribute to the tetradecanoyl-CoA site.

Belongs to the NMT family. Heterodimer composed of NMT and AK2; AK2 myristoylation stabilizes the complex.

The protein resides in the cytoplasm. It catalyses the reaction N-terminal glycyl-[protein] + tetradecanoyl-CoA = N-tetradecanoylglycyl-[protein] + CoA + H(+). In terms of biological role, adds a myristoyl group to the N-terminal glycine residue of certain cellular proteins. Myristoylates adenylate kinase AK2. During the asexual blood stage, may myristoylate proteins such as ARO, CDPK1 and GAP45. Probably by mediating protein myristoylation, plays a role in the assembly of the inner membrane complex during the early stages of schizogony and in the formation of rhoptries in the late stages and thus merozoite egress. This is Glycylpeptide N-tetradecanoyltransferase from Plasmodium falciparum (isolate 3D7).